The primary structure comprises 163 residues: Nucleotide-binding protein CYB_0891 (163 aa).

This sequence belongs to the YajQ family.

Its function is as follows. Nucleotide-binding protein. The polypeptide is Nucleotide-binding protein CYB_0891 (Synechococcus sp. (strain JA-2-3B'a(2-13)) (Cyanobacteria bacterium Yellowstone B-Prime)).